The primary structure comprises 205 residues: Ras-related protein Rab-18-B (205 aa).

Residues Ser-17, Gly-20, Lys-21, Ser-22, Ser-23, Asp-34, Pro-35, Thr-40, Gly-66, Lys-123, Asp-125, and Ala-152 each contribute to the GTP site. A Mg(2+)-binding site is contributed by Ser-22. Short sequence motifs (switch) lie at residues 31–45 (DTFD…GVDF) and 63–80 (DTAG…YYRG). Residue Thr-40 participates in Mg(2+) binding. Cys-198 carries the S-palmitoyl cysteine lipid modification. Cys-202 carries the cysteine methyl ester modification. Cys-202 is lipidated: S-geranylgeranyl cysteine. A propeptide spans 203–205 (SLV) (removed in mature form).

This sequence belongs to the small GTPase superfamily. Rab family. Mg(2+) is required as a cofactor.

The protein resides in the endoplasmic reticulum membrane. It localises to the golgi apparatus. It is found in the cis-Golgi network membrane. The protein localises to the lipid droplet. Its subcellular location is the apical cell membrane. The enzyme catalyses GTP + H2O = GDP + phosphate + H(+). With respect to regulation, regulated by guanine nucleotide exchange factors (GEFs) which promote the exchange of bound GDP for free GTP. Regulated by GTPase activating proteins (GAPs) which increase the GTP hydrolysis activity at the ER membrane. Inhibited by GDP dissociation inhibitors (GDIs) which prevent Rab-GDP dissociation. Its function is as follows. The small GTPases Rab are key regulators of intracellular membrane trafficking, from the formation of transport vesicles to their fusion with membranes. Rabs cycle between an inactive GDP-bound form and an active GTP-bound form that is able to recruit to membranes different sets of downstream effectors directly responsible for vesicle formation, movement, tethering and fusion. Required for the localization of ZFYVE1 to lipid droplets and for its function in mediating the formation of endoplasmic reticulum-lipid droplets (ER-LD) contacts. Also required for maintaining endoplasmic reticulum structure. Plays a role in apical endocytosis/recycling. Plays a key role in eye and brain development and neurodegeneration. The protein is Ras-related protein Rab-18-B (rab18b) of Danio rerio (Zebrafish).